The chain runs to 431 residues: Protein prenyltransferase alpha subunit repeat-containing protein 1-B (431 aa).

5 PFTA repeats span residues 85-118 (ELID…TLNP), 120-153 (KDLQ…VQEL), 178-211 (EEMH…GNLN), 217-250 (DELS…LCKT), and 293-326 (EEMK…HQLL). The segment at 363–383 (PMDVDGMSDPNKQGYTQETKR) is disordered. The stretch at 394–431 (SLDSELRFINCVLTNCCSPEQSRFAASYRKWLLSLQGY) is one PFTA 6 repeat.

Belongs to the protein prenyltransferase subunit alpha family.

The polypeptide is Protein prenyltransferase alpha subunit repeat-containing protein 1-B (ptar1-b) (Xenopus laevis (African clawed frog)).